Consider the following 114-residue polypeptide: Turripeptide OL22 (114 aa).

Post-translationally, contains 6 disulfide bonds. As to expression, expressed by the venom duct.

The protein localises to the secreted. Functionally, acts as a neurotoxin by inhibiting an ion channel. The chain is Turripeptide OL22 from Iotyrris olangoensis (Sea snail).